Consider the following 469-residue polypeptide: Protein RUFY3 (469 aa).

T5 and T12 each carry phosphothreonine. Phosphoserine is present on residues S34 and S49. Residue T51 is modified to Phosphothreonine. Positions 95–227 constitute an RUN domain; the sequence is DSDYAPLQQF…IDANFCMKGE (133 aa). 2 coiled-coil regions span residues 271-362 and 422-463; these read NRHL…VEKE and KSEL…AANK.

In terms of assembly, interacts with PAK1. Interacts (via C-terminus) with Ras-related Rab-5 proteins. Interacts (via C-terminus) with Ras-related Rap-2 proteins. Interacts with PIK3CA and PIK3R1. Interacts (via N-terminus) with FSCN1; this interaction induces neuron axon development. Interacts with DBN1. Interacts (via the second coiled coil) with GTP-, but not GDP-bound ARL8A and ARL8B. Interacts with dynactin/DCTN1 and the dynein intermediate chain DYNC1I1/2. Directly interacts with DYNC1LI1. In terms of processing, isoform 1 is partially phosphorylated. Phosphorylated by PAK1. Expressed in brain (at protein level).

Its subcellular location is the cytoplasm. It localises to the endomembrane system. The protein resides in the cell projection. The protein localises to the invadopodium. It is found in the growth cone. Its subcellular location is the perikaryon. It localises to the filopodium. The protein resides in the lamellipodium. The protein localises to the lysosome. In terms of biological role, ARL8 effector that promotes the coupling of endolysosomes to dynein-dynactin for retrograde transport along microtubules. Acts by binding both GTP-bound ARL8 and dynein-dynactin. In nonneuronal cells, promotes concentration of endolysosomes in the juxtanuclear area. In hippocampal neurons, drives retrograde transport of endolysosomes from the axon to the soma. Plays a role in the generation of neuronal polarity formation and axon growth. Implicated in the formation of a single axon by developing neurons. May inhibit the formation of additional axons by inhibition of PI3K in minor neuronal processes. Plays a role in the formation of F-actin-enriched protrusive structures at the cell periphery. Plays a role in cytoskeletal organization by regulating the subcellular localization of FSCN1 and DBN1 at axonal growth cones. This Rattus norvegicus (Rat) protein is Protein RUFY3.